The following is a 296-amino-acid chain: 4-hydroxy-tetrahydrodipicolinate synthase (296 aa).

Position 49 (T49) interacts with pyruvate. The active-site Proton donor/acceptor is the Y137. Residue K165 is the Schiff-base intermediate with substrate of the active site. I207 is a binding site for pyruvate.

It belongs to the DapA family. As to quaternary structure, homotetramer; dimer of dimers.

It localises to the cytoplasm. It catalyses the reaction L-aspartate 4-semialdehyde + pyruvate = (2S,4S)-4-hydroxy-2,3,4,5-tetrahydrodipicolinate + H2O + H(+). It participates in amino-acid biosynthesis; L-lysine biosynthesis via DAP pathway; (S)-tetrahydrodipicolinate from L-aspartate: step 3/4. Functionally, catalyzes the condensation of (S)-aspartate-beta-semialdehyde [(S)-ASA] and pyruvate to 4-hydroxy-tetrahydrodipicolinate (HTPA). The protein is 4-hydroxy-tetrahydrodipicolinate synthase of Afipia carboxidovorans (strain ATCC 49405 / DSM 1227 / KCTC 32145 / OM5) (Oligotropha carboxidovorans).